Here is a 205-residue protein sequence, read N- to C-terminus: Ribosomal RNA small subunit methyltransferase J (205 aa).

S-adenosyl-L-methionine is bound by residues 56–57 (RD), 72–73 (ER), and Asp-124.

The protein belongs to the methyltransferase superfamily. RsmJ family.

Its subcellular location is the cytoplasm. It carries out the reaction guanosine(1516) in 16S rRNA + S-adenosyl-L-methionine = N(2)-methylguanosine(1516) in 16S rRNA + S-adenosyl-L-homocysteine + H(+). Specifically methylates the guanosine in position 1516 of 16S rRNA. The polypeptide is Ribosomal RNA small subunit methyltransferase J (Brucella anthropi (strain ATCC 49188 / DSM 6882 / CCUG 24695 / JCM 21032 / LMG 3331 / NBRC 15819 / NCTC 12168 / Alc 37) (Ochrobactrum anthropi)).